The chain runs to 499 residues: MSRLQTEEQAVDSEGDSSLHRRNEEGTQSSHRMLGFSDALLSIIATVMILPVTHTEISPEQQFDKSIQKLLATRIAVYLMTFLIVTVAWTAHTRLFQVVGKIDDTLALLNLACMMTITLLPYTFSLMVTFPDVPLGIFLFCVCVIAIGSVQAMIVGYAFHFPHLLNPQIQCSTHRDLSRRHILHLVLRGPALCFVAAVFSLFFFPLSYLLMVTVIFLPHISKATTWCKDKLMGQRESPAHDMEPFSIDLHAPLSKERVEAFSDGVYAIVATLLILDICEDNVPDPKDVQEKFSGSLVAALGAYGPQFLAYFGSFATVGLLWFAHHSLFLHVRKATQTMGLLNILSLAFVGGLPLAYQQTSAFARQPHDELERVRVSCAIIFFASIFQFAIWTTALLHQTETLQPAVQFGGQEHAFMFAKLALYPCASLLAFAATCLLSRFSTAIFHLMQISVPFAFLLLRLLVRLALAGLQVLRGLWPHHPQQDQSEPEAQSQLLPDPC.

At 1–30 (MSRLQTEEQAVDSEGDSSLHRRNEEGTQSS) the chain is on the cytoplasmic side. A disordered region spans residues 1–30 (MSRLQTEEQAVDSEGDSSLHRRNEEGTQSS). Thr6 is modified (phosphothreonine). A helical membrane pass occupies residues 31–53 (HRMLGFSDALLSIIATVMILPVT). Residues 32–38 (RMLGFSD) carry the RxxxFSD motif 1 motif. Residues 54-74 (HTEISPEQQFDKSIQKLLATR) lie on the Lumenal side of the membrane. Residues 55–60 (TEISPE) are short helix H1-1. A short helix H2-1 region spans residues 62-68 (QFDKSIQ). The chain crosses the membrane as a helical span at residues 75 to 97 (IAVYLMTFLIVTVAWTAHTRLFQ). At 98–103 (VVGKID) the chain is on the cytoplasmic side. The chain crosses the membrane as a helical span at residues 104 to 125 (DTLALLNLACMMTITLLPYTFS). The Lumenal segment spans residues 126–135 (LMVTFPDVPL). A helical membrane pass occupies residues 136-157 (GIFLFCVCVIAIGSVQAMIVGY). Residues 158–181 (AFHFPHLLNPQIQCSTHRDLSRRH) are Cytoplasmic-facing. The chain crosses the membrane as a helical span at residues 182 to 202 (ILHLVLRGPALCFVAAVFSLF). Residues 203–207 (FFPLS) are Lumenal-facing. The chain crosses the membrane as a helical span at residues 208 to 227 (YLLMVTVIFLPHISKATTWC). Over 228–254 (KDKLMGQRESPAHDMEPFSIDLHAPLS) the chain is Cytoplasmic. A helical membrane pass occupies residues 255–279 (KERVEAFSDGVYAIVATLLILDICE). Residues 257 to 263 (RVEAFSD) carry the RxxxFSD motif 2 motif. Over 280–306 (DNVPDPKDVQEKFSGSLVAALGAYGPQ) the chain is Lumenal. Positions 285–293 (PKDVQEKFS) are short helix H1-2. The short helix H2-2 stretch occupies residues 295-301 (SLVAALG). Residues 307–329 (FLAYFGSFATVGLLWFAHHSLFL) traverse the membrane as a helical segment. At 330–335 (HVRKAT) the chain is on the cytoplasmic side. The chain crosses the membrane as a helical span at residues 336 to 357 (QTMGLLNILSLAFVGGLPLAYQ). Residues 358–372 (QTSAFARQPHDELER) lie on the Lumenal side of the membrane. Residues 373-393 (VRVSCAIIFFASIFQFAIWTT) traverse the membrane as a helical segment. Topologically, residues 394–413 (ALLHQTETLQPAVQFGGQEH) are cytoplasmic. Residues 414–437 (AFMFAKLALYPCASLLAFAATCLL) form a helical membrane-spanning segment. Residues 438 to 439 (SR) are Lumenal-facing. The helical transmembrane segment at 440 to 466 (FSTAIFHLMQISVPFAFLLLRLLVRLA) threads the bilayer. The Cytoplasmic segment spans residues 467 to 499 (LAGLQVLRGLWPHHPQQDQSEPEAQSQLLPDPC).

Belongs to the TMEM175 family. As to quaternary structure, homodimer. Interacts with AKT (AKT1, AKT2 or AKT3); leading to formation of the lysoK(GF) complex, which activates the channel. Interacts with LAMP1; inhibiting the proton channel activity of TMEM175. Interacts with LAMP2; inhibiting the proton channel activity of TMEM175.

The protein localises to the endosome membrane. Its subcellular location is the lysosome membrane. The catalysed reaction is H(+)(in) = H(+)(out). The enzyme catalyses K(+)(in) = K(+)(out). With respect to regulation, active at low pH (under pH 4.6): proton channel activity is activated by luminal side protons. Polyunsaturated fatty acids, such as arachidonic acid, also activate the channel activity. Proton channel activity is directly inhibited by LAMP1 or LAMP2, facilitating lysosomal acidification. Channel activity is activated following interaction with AKT (AKT1, AKT2 or AKT3): interaction promotes activation from closed to an open state. Activation by AKT is independent of AKT serine/threonine-protein kinase activity. Proton-activated proton channel that catalyzes proton efflux from endosomes and lysosomes to maintain a steady-state pH. Activated at low pH (under pH 4.6) by luminal side protons: selectively mediates lysosomal proton release from lysosomes, eliciting a proton leak that balances V-ATPase activity to maintain pH homeostasis. Regulation of lumenal pH stability is required for autophagosome-lysosome fusion. Also acts as a potassium channel at higher pH, regulating potassium conductance in endosomes and lysosomes. Constitutes the pore-forming subunit of the lysoK(GF) complex, a complex activated by extracellular growth factors. The lysoK(GF) complex is composed of TMEM175 and AKT (AKT1, AKT2 or AKT3), a major target of growth factor receptors: in the complex, TMEM175 channel is opened by conformational changes by AKT, leading to its activation. The lysoK(GF) complex is required to protect neurons against stress-induced damage. The polypeptide is Endosomal/lysosomal proton channel TMEM175 (Mus musculus (Mouse)).